Here is a 111-residue protein sequence, read N- to C-terminus: Nucleoid-associated protein Cphamn1_1179 (111 aa).

Belongs to the YbaB/EbfC family. In terms of assembly, homodimer.

The protein resides in the cytoplasm. It is found in the nucleoid. Binds to DNA and alters its conformation. May be involved in regulation of gene expression, nucleoid organization and DNA protection. The sequence is that of Nucleoid-associated protein Cphamn1_1179 from Chlorobium phaeobacteroides (strain BS1).